A 66-amino-acid chain; its full sequence is DNA-binding protein 7d (66 aa).

N6-methyllysine; partial occurs at positions 5 and 7.

It belongs to the 7 kDa DNA-binding/endoribonuclease P2 family. As to quaternary structure, monomer. In terms of processing, lys-5 was 70% monomethylated in form 7a, 25% in form 7b, and 20% in form 7d. Lys-7 was 50% monomethylated in form 7a, 40% in form 7b, and 50% in form 7d.

The protein localises to the cytoplasm. Functionally, can constrain negative DNA supercoils. May be involved in maintaining the integrity of the genome at high temperature. This chain is DNA-binding protein 7d, found in Sulfolobus acidocaldarius (strain ATCC 33909 / DSM 639 / JCM 8929 / NBRC 15157 / NCIMB 11770).